The sequence spans 1385 residues: DNA-directed RNA polymerase subunit beta' (1385 aa).

Positions 72, 74, 87, and 90 each coordinate Zn(2+). Residues aspartate 467, aspartate 469, and aspartate 471 each coordinate Mg(2+). Zn(2+) contacts are provided by cysteine 829, cysteine 910, cysteine 917, and cysteine 920.

It belongs to the RNA polymerase beta' chain family. The RNAP catalytic core consists of 2 alpha, 1 beta, 1 beta' and 1 omega subunit. When a sigma factor is associated with the core the holoenzyme is formed, which can initiate transcription. It depends on Mg(2+) as a cofactor. Zn(2+) serves as cofactor.

The enzyme catalyses RNA(n) + a ribonucleoside 5'-triphosphate = RNA(n+1) + diphosphate. Functionally, DNA-dependent RNA polymerase catalyzes the transcription of DNA into RNA using the four ribonucleoside triphosphates as substrates. The chain is DNA-directed RNA polymerase subunit beta' from Elusimicrobium minutum (strain Pei191).